Here is a 101-residue protein sequence, read N- to C-terminus: Small ribosomal subunit protein bS18c (101 aa).

A compositionally biased stretch (basic residues) spans 1-19; sequence MDKSKQLFRKSKRSFRRRL. The tract at residues 1–23 is disordered; sequence MDKSKQLFRKSKRSFRRRLPPIG.

The protein belongs to the bacterial ribosomal protein bS18 family. In terms of assembly, part of the 30S ribosomal subunit.

It is found in the plastid. Its subcellular location is the chloroplast. In Acorus calamus (Sweet flag), this protein is Small ribosomal subunit protein bS18c.